Reading from the N-terminus, the 97-residue chain is UPF0147 protein MA_0092 (97 aa).

It belongs to the UPF0147 family.

In Methanosarcina acetivorans (strain ATCC 35395 / DSM 2834 / JCM 12185 / C2A), this protein is UPF0147 protein MA_0092.